Consider the following 76-residue polypeptide: Parvalbumin beta 3 (76 aa).

Alanine 1 carries the post-translational modification N-acetylalanine. The region spanning 31 to 66 (KSPEEVKKFFAIIDQDHSGFIEEEELKLFLQTFSAG) is the EF-hand domain. The Ca(2+) site is built by aspartate 44, aspartate 46, serine 48, phenylalanine 50, glutamate 52, and glutamate 55.

The protein belongs to the parvalbumin family.

Its function is as follows. In muscle, parvalbumin is thought to be involved in relaxation after contraction. It binds two calcium ions. The polypeptide is Parvalbumin beta 3 (Merluccius polylepis (Southern hake)).